Here is a 445-residue protein sequence, read N- to C-terminus: Exodeoxyribonuclease 7 large subunit (445 aa).

This sequence belongs to the XseA family. As to quaternary structure, heterooligomer composed of large and small subunits.

It localises to the cytoplasm. It catalyses the reaction Exonucleolytic cleavage in either 5'- to 3'- or 3'- to 5'-direction to yield nucleoside 5'-phosphates.. Functionally, bidirectionally degrades single-stranded DNA into large acid-insoluble oligonucleotides, which are then degraded further into small acid-soluble oligonucleotides. The sequence is that of Exodeoxyribonuclease 7 large subunit from Xanthomonas oryzae pv. oryzae (strain PXO99A).